We begin with the raw amino-acid sequence, 285 residues long: uncharacterized protein (285 aa).

Residues 1–25 (MANQKKKTLPPQHQNQQPGFEYLMD) are disordered. Residue 45 to 69 (IITGGDSGIGRAVSVLFAKEGANVV) participates in NADP(+) binding. Position 177 (S177) interacts with substrate. Catalysis depends on Y190, which acts as the Proton acceptor.

It belongs to the short-chain dehydrogenases/reductases (SDR) family.

This is an uncharacterized protein from Bacillus subtilis (strain 168).